We begin with the raw amino-acid sequence, 279 residues long: Large ribosomal subunit protein uL2 (279 aa).

The disordered stretch occupies residues 202–279; it reads NASIGKAGRS…TSRHKSKKKG (78 aa). Over residues 209–220 the composition is skewed to basic residues; it reads GRSRWLGRRPHN.

Belongs to the universal ribosomal protein uL2 family. In terms of assembly, part of the 50S ribosomal subunit. Forms a bridge to the 30S subunit in the 70S ribosome.

One of the primary rRNA binding proteins. Required for association of the 30S and 50S subunits to form the 70S ribosome, for tRNA binding and peptide bond formation. It has been suggested to have peptidyltransferase activity; this is somewhat controversial. Makes several contacts with the 16S rRNA in the 70S ribosome. The chain is Large ribosomal subunit protein uL2 from Methylocella silvestris (strain DSM 15510 / CIP 108128 / LMG 27833 / NCIMB 13906 / BL2).